Reading from the N-terminus, the 413-residue chain is uncharacterized protein (413 aa).

The first 20 residues, Met1–Gly20, serve as a signal peptide directing secretion.

This is an uncharacterized protein from Archaeoglobus fulgidus (strain ATCC 49558 / DSM 4304 / JCM 9628 / NBRC 100126 / VC-16).